Consider the following 3184-residue polypeptide: Cilia and flagella-associated protein 47 (3184 aa).

The 123-residue stretch at 1729-1851 folds into the Calponin-homology (CH) domain; sequence SDSERILLSW…LCVYLYERLP (123 aa). The disordered stretch occupies residues 2491–2514; sequence RDEEESQEETDTEKDFSSQETPSD. The segment covering 2493–2502 has biased composition (acidic residues); it reads EEESQEETDT.

Interacts with CFAP65. As to expression, highly expressed in spermatzoa (at protein level).

The protein localises to the cytoplasm. It localises to the cytoskeleton. Its subcellular location is the flagellum basal body. Its function is as follows. Plays a role in flagellar formation and sperm motility. This is Cilia and flagella-associated protein 47 from Mus musculus (Mouse).